Here is a 493-residue protein sequence, read N- to C-terminus: MHTLVFLSTRQVLQCQPAACQALPLLPRELFPLLFKVAFMDKKTLVLRELVHTWPFPLLSFQQLLQECAHCSRALLQERLSTESMQAVILGLTARIHTQETEAGTQPLCRKHALRVLDMTGLLDDGVEQDPETMSMWDCTAAVARTCIAQQQGGTAEPGLSPVPVEIRVDLRVNRASYTFLREALQSSVASPLRLCCRDLRAEDLPMRNTVALLQLLDAGCLRRIDLRFNNLGLRGLSVIIPHVARFQHLASLRLHYVHGDSRQPSVDGEDNFRYFLAQMGRFMCLRELSMGSSLLSGRLDQLLSTLQRPLESLELAFCALLPEDLRFLAQSSHAAHLKKLDLSGNDLSGNQLTPFQGLLQAVATTLLHLELTECQLADAQLLATLPTLTRCASLRYLGLYGNPLSMAGLKELLRDSVVQAELRTVVHPFPVDCYEGLPWPPPASVLLEASINEEKFARVEAELHQLLLASGRAHVLWTTDIYGRLAADYFSL.

Residues 111-146 (KHALRVLDMTGLLDDGVEQDPETMSMWDCTAAVART) form an LRR 1; degenerate repeat. The LRR 2; degenerate repeat unit spans residues 194–218 (RLCCRDLRAEDLPMRNTVALLQLLD). The stretch at 219 to 246 (AGCLRRIDLRFNNLGLRGLSVIIPHVAR) is one LRR 3; degenerate repeat. The LRR 4; degenerate repeat unit spans residues 247–282 (FQHLASLRLHYVHGDSRQPSVDGEDNFRYFLAQMGR). LRR repeat units lie at residues 283-307 (FMCL…LSTL), 308-339 (QRPL…AHLK), 340-360 (KLDL…QGLL), 364-391 (ATTL…TLTR), and 392-416 (CASL…LLRD).

It belongs to the PRAME family. LRRC14 subfamily. As to quaternary structure, interacts with IKBKB; disrupts IKBKB-IKBKG interaction preventing I-kappa-B-kinase (IKK) core complex formation and leading to a decrease of IKBKB phosphorylation and NF-kappaB activation. Interacts with CHUK.

The protein resides in the cytoplasm. Negatively regulates Toll-like receptor-mediated NF-kappa-B signaling by disrupting IKK core complex formation through interaction with IKBKB. The polypeptide is Leucine-rich repeat-containing protein 14 (Mus musculus (Mouse)).